The following is a 55-amino-acid chain: Trypsin inhibitor (55 aa).

A Kazal-like domain is found at 1-55; that stretch reads AHMDCTEFNPLCRCNKMLGDLICAVIGDAKEEHRNMCALCCEHPGGFEYSNGPCE. Disulfide bonds link cysteine 5–cysteine 40, cysteine 12–cysteine 41, cysteine 14–cysteine 37, and cysteine 23–cysteine 54.

Its subcellular location is the secreted. Potent inhibitor of trypsin. The protein is Trypsin inhibitor of Halocynthia roretzi (Sea squirt).